A 271-amino-acid polypeptide reads, in one-letter code: Nodulin-26 (271 aa).

2 helical membrane passes run 40–62 (LVAE…VVNE) and 72–94 (GIAI…ISGG). The NPA 1 signature appears at 97 to 99 (NPA). The next 3 membrane-spanning stretches (helical) occupy residues 115-137 (VPAY…RLLF), 152-174 (TNLQ…ICGV), and 181-203 (VGEF…GGPV). Positions 209–211 (NPA) match the NPA 2 motif. The helical transmembrane segment at 225-247 (GIWIYLLAPVVGAIAGAWVYNIV) threads the bilayer. Ser262 is modified (phosphoserine; by CPK).

It belongs to the MIP/aquaporin (TC 1.A.8) family. NIP (TC 1.A.8.12) subfamily.

Its subcellular location is the symbiosome. It is found in the peribacteroid membrane. Functionally, aquaporins facilitate the transport of water and small neutral solutes across cell membranes. This aquaporin may function in transporting small molecules across the peribacteroid membranes. This chain is Nodulin-26, found in Glycine max (Soybean).